We begin with the raw amino-acid sequence, 215 residues long: Peroxiredoxin 1 (215 aa).

Residues 1-157 (MKLYQKFPET…LLRITKAALV (157 aa)) enclose the Thioredoxin domain. The Cysteine sulfenic acid (-SOH) intermediate role is filled by Cys-45. Arg-120 is a binding site for substrate.

It belongs to the peroxiredoxin family. Prx6 subfamily. As to quaternary structure, homodecamer. Pentamer of dimers that assemble into a ring structure.

It localises to the cytoplasm. It catalyses the reaction a hydroperoxide + [thioredoxin]-dithiol = an alcohol + [thioredoxin]-disulfide + H2O. Functionally, thiol-specific peroxidase that catalyzes the reduction of hydrogen peroxide and organic hydroperoxides to water and alcohols, respectively. Plays a role in cell protection against oxidative stress by detoxifying peroxides. The sequence is that of Peroxiredoxin 1 from Sulfuracidifex metallicus (Sulfolobus metallicus).